A 336-amino-acid polypeptide reads, in one-letter code: Phospholipase A1 (336 aa).

The first 27 residues, 1-27 (MEENMNLKYLLLFVYFVQVLNCCYGHG), serve as a signal peptide directing secretion. The propeptide occupies 28 to 36 (DPLSYELDR). A disulfide bond links Cys-40 and Cys-123. Ser-173 serves as the catalytic Nucleophile. The active-site Charge relay system is the Asp-201. 2 disulfide bridges follow: Cys-212/Cys-217 and Cys-255/Cys-263. His-265 serves as the catalytic Charge relay system. 3 cysteine pairs are disulfide-bonded: Cys-280-Cys-304, Cys-281-Cys-329, and Cys-297-Cys-302.

This sequence belongs to the AB hydrolase superfamily. Lipase family. Expressed by the venom gland.

It localises to the secreted. It carries out the reaction a 1,2-diacyl-sn-glycero-3-phosphocholine + H2O = a 2-acyl-sn-glycero-3-phosphocholine + a fatty acid + H(+). Its function is as follows. Catalyzes the hydrolysis of phosphatidylcholine with phospholipase A1 activity. Induces hemolytic activity. Acts as an allergen. The chain is Phospholipase A1 from Vespula vulgaris (Yellow jacket).